We begin with the raw amino-acid sequence, 615 residues long: DNA mismatch repair protein MutL (615 aa).

A disordered region spans residues 362 to 397 (HFAEPAVREPVAPRYSPAPASGGRPAASWPNAQPGY). A compositionally biased stretch (low complexity) spans 378 to 391 (PAPASGGRPAASWP).

The protein belongs to the DNA mismatch repair MutL/HexB family.

Its function is as follows. This protein is involved in the repair of mismatches in DNA. It is required for dam-dependent methyl-directed DNA mismatch repair. May act as a 'molecular matchmaker', a protein that promotes the formation of a stable complex between two or more DNA-binding proteins in an ATP-dependent manner without itself being part of a final effector complex. This chain is DNA mismatch repair protein MutL, found in Escherichia fergusonii (strain ATCC 35469 / DSM 13698 / CCUG 18766 / IAM 14443 / JCM 21226 / LMG 7866 / NBRC 102419 / NCTC 12128 / CDC 0568-73).